The following is a 1212-amino-acid chain: DNA-directed RNA polymerase subunit beta'' (1212 aa).

Cys-229, Cys-302, Cys-309, and Cys-312 together coordinate Zn(2+). The tract at residues 1162–1212 is disordered; the sequence is QKETSKNKKETSKNKKETSKNKKETSKNKKETSKNKKETSKNKKEASKNKK.

This sequence belongs to the RNA polymerase beta' chain family. RpoC2 subfamily. In terms of assembly, in plastids the minimal PEP RNA polymerase catalytic core is composed of four subunits: alpha, beta, beta', and beta''. When a (nuclear-encoded) sigma factor is associated with the core the holoenzyme is formed, which can initiate transcription. The cofactor is Zn(2+).

The protein localises to the plastid. It localises to the chloroplast. The enzyme catalyses RNA(n) + a ribonucleoside 5'-triphosphate = RNA(n+1) + diphosphate. DNA-dependent RNA polymerase catalyzes the transcription of DNA into RNA using the four ribonucleoside triphosphates as substrates. This Cryptomeria japonica (Japanese cedar) protein is DNA-directed RNA polymerase subunit beta''.